The chain runs to 305 residues: MLDTSIQALINKWQKYLVLQRNYSNHTVISYNNDLKHFLEFMNYYNSELVTINHIKTADIRLIRSWLAKRNCDNFTASSISRGLSAVKNFYRFLEKTTQLNSHIIFSIKSPKKTKLLPKALSEDDVVISLEHIEEYGNVKWIELRNKALLVLIYASGLRISEALSITKLHLQNLEFIRIIGKGSKERIIPWLPIAKNLITQYLEILPYKLGDNEPIFRGKQGKKLQPPVFNRELIKLKHFYGLPQHLTAHSFRHSFASHLLEHGADLRSLQELLGHKSLSTTQSYTKTSIKHLEAVYTTAYPIKK.

Positions 4–95 (TSIQALINKW…AVKNFYRFLE (92 aa)) constitute a Core-binding (CB) domain. Residues 116-298 (LLPKALSEDD…SIKHLEAVYT (183 aa)) form the Tyr recombinase domain. Active-site residues include Arg-159, Lys-182, His-250, Arg-253, and His-276. Catalysis depends on Tyr-285, which acts as the O-(3'-phospho-DNA)-tyrosine intermediate.

It belongs to the 'phage' integrase family. XerC subfamily. As to quaternary structure, forms a cyclic heterotetrameric complex composed of two molecules of XerC and two molecules of XerD.

The protein localises to the cytoplasm. Site-specific tyrosine recombinase, which acts by catalyzing the cutting and rejoining of the recombining DNA molecules. The XerC-XerD complex is essential to convert dimers of the bacterial chromosome into monomers to permit their segregation at cell division. It also contributes to the segregational stability of plasmids. In Rickettsia africae (strain ESF-5), this protein is Tyrosine recombinase XerC.